The primary structure comprises 369 residues: Cellular tumor antigen p53 (369 aa).

Residues 1–28 form a transcription activation (acidic) region; the sequence is MAESQEFAELWERNLISTQEAGTCWELI. A DNA-binding region spans residues 66–256; the sequence is DYPGEHGFKL…KTEESNFRKD (191 aa). Zn(2+) is bound by residues C140, H143, C202, and C206. Residues 237 to 244 are interaction with DNA; it reads RVCACPGR. Residues 246–263 show a composition bias toward basic and acidic residues; the sequence is RKTEESNFRKDQETKTLD. Disordered stretches follow at residues 246-296 and 318-369; these read RKTE…SGSS and NDSL…SDSD. Over residues 269-281 the composition is skewed to polar residues; sequence NKRSLTKDSTSSV. Residues 270–289 carry the Bipartite nuclear localization signal motif; sequence KRSLTKDSTSSVPRPEGSKK. The tract at residues 298 to 329 is oligomerization; the sequence is EEIYTLQVRGKERYEMLKKINDSLELSDVVPP. The short motif at 312-323 is the Nuclear export signal element; the sequence is EMLKKINDSLEL. The basic (repression of DNA-binding) stretch occupies residues 342 to 365; sequence KGKKKDGQTPEPKRGKKLMVKDEK. Positions 346–369 are enriched in basic and acidic residues; the sequence is KDGQTPEPKRGKKLMVKDEKSDSD.

It belongs to the p53 family. Binds DNA as a homotetramer. It depends on Zn(2+) as a cofactor.

The protein localises to the cytoplasm. It is found in the nucleus. Functionally, multifunctional transcription factor that induces cell cycle arrest, DNA repair or apoptosis upon binding to its target DNA sequence. Acts as a tumor suppressor in many tumor types; induces growth arrest or apoptosis depending on the physiological circumstances and cell type. Negatively regulates cell division by controlling expression of a set of genes required for this process. One of the activated genes is an inhibitor of cyclin-dependent kinases. Apoptosis induction seems to be mediated either by stimulation of BAX and FAS antigen expression, or by repression of Bcl-2 expression. The polypeptide is Cellular tumor antigen p53 (tp53) (Barbus barbus (Barbel)).